The chain runs to 160 residues: Putative 4-hydroxy-4-methyl-2-oxoglutarate aldolase (160 aa).

Substrate contacts are provided by residues 78–81 and Arg-100; that span reads GDVI. An a divalent metal cation-binding site is contributed by Asp-101.

This sequence belongs to the class II aldolase/RraA-like family. In terms of assembly, homotrimer. A divalent metal cation is required as a cofactor.

The catalysed reaction is 4-hydroxy-4-methyl-2-oxoglutarate = 2 pyruvate. The enzyme catalyses oxaloacetate + H(+) = pyruvate + CO2. Its function is as follows. Catalyzes the aldol cleavage of 4-hydroxy-4-methyl-2-oxoglutarate (HMG) into 2 molecules of pyruvate. Also contains a secondary oxaloacetate (OAA) decarboxylase activity due to the common pyruvate enolate transition state formed following C-C bond cleavage in the retro-aldol and decarboxylation reactions. In Mycolicibacterium vanbaalenii (strain DSM 7251 / JCM 13017 / BCRC 16820 / KCTC 9966 / NRRL B-24157 / PYR-1) (Mycobacterium vanbaalenii), this protein is Putative 4-hydroxy-4-methyl-2-oxoglutarate aldolase.